The chain runs to 389 residues: uncharacterized protein (389 aa).

Positions 1–23 are cleaved as a signal peptide; it reads MHFAKLGAIGLLGSIICAYAASA.

This sequence belongs to the IUNH family.

Its subcellular location is the endoplasmic reticulum lumen. This is an uncharacterized protein from Schizosaccharomyces pombe (strain 972 / ATCC 24843) (Fission yeast).